The following is a 689-amino-acid chain: DNA ligase (689 aa).

Residues 51–55, 100–101, and E129 each bind NAD(+); these read DSEYD and SL. The active-site N6-AMP-lysine intermediate is the K131. NAD(+)-binding residues include R152, E189, K308, and K332. Zn(2+)-binding residues include C426, C429, C444, and C450. The BRCT domain maps to 609 to 689; sequence ADEQPLKGQT…ELLALLAANR (81 aa).

Belongs to the NAD-dependent DNA ligase family. LigA subfamily. Mg(2+) is required as a cofactor. The cofactor is Mn(2+).

The catalysed reaction is NAD(+) + (deoxyribonucleotide)n-3'-hydroxyl + 5'-phospho-(deoxyribonucleotide)m = (deoxyribonucleotide)n+m + AMP + beta-nicotinamide D-nucleotide.. Functionally, DNA ligase that catalyzes the formation of phosphodiester linkages between 5'-phosphoryl and 3'-hydroxyl groups in double-stranded DNA using NAD as a coenzyme and as the energy source for the reaction. It is essential for DNA replication and repair of damaged DNA. In Shewanella oneidensis (strain ATCC 700550 / JCM 31522 / CIP 106686 / LMG 19005 / NCIMB 14063 / MR-1), this protein is DNA ligase.